A 379-amino-acid chain; its full sequence is Sperm microtubule associated protein 2 (379 aa).

The segment at 1-82 (MGDSRRRSLG…EFPETLDPKE (82 aa)) is disordered. Basic and acidic residues-rich tracts occupy residues 19 to 29 (GRSEREQDGDP) and 38 to 50 (ESRRVTDPERQDL). Residues 56–76 (GPEDPEEELPPEEVAGEEFPE) show a composition bias toward acidic residues. 6 THEG repeats span residues 118–137 (KARKRRRRRRLMELAEPKIN), 184–203 (TITVPAVSRRVEELSRPKRF), 222–241 (SSLEYRASSRLKELAAPKIR), 258–277 (AAQMAVPSSRILQLSKPKAP), 290–309 (PKPHVSDHNRLLHLARPKAQ), and 326–345 (VTKKVVASPRIISLAKPKVR). At Ser-295 the chain carries Phosphoserine. The disordered stretch occupies residues 344–379 (VRKGLNEGYDRRPLASMSLPPPKASPEKCDQPRPGL). 2 stretches are compositionally biased toward basic and acidic residues: residues 347-356 (GLNEGYDRRP) and 368-379 (SPEKCDQPRPGL).

Interacts with CCT5. In terms of tissue distribution, testis specific.

Its subcellular location is the nucleus. May be involved (but not essential) in spermatogenesis. The polypeptide is Sperm microtubule associated protein 2 (Homo sapiens (Human)).